The chain runs to 233 residues: UPF0502 protein YPTS_2082 (233 aa).

It belongs to the UPF0502 family.

This Yersinia pseudotuberculosis serotype IB (strain PB1/+) protein is UPF0502 protein YPTS_2082.